We begin with the raw amino-acid sequence, 339 residues long: Arylacetonitrilase (339 aa).

The CN hydrolase domain maps to 5 to 290 (IRVAVTQAEP…EGIVYADLDL (286 aa)). Glu45 serves as the catalytic Proton acceptor. Lys126 is a catalytic residue. The active-site Nucleophile is the Cys167.

This sequence belongs to the carbon-nitrogen hydrolase superfamily. Nitrilase family.

The enzyme catalyses a nitrile + 2 H2O = a carboxylate + NH4(+). It catalyses the reaction 4-chlorophenylacetonitrile + 2 H2O = 4-chlorophenylacetate + NH4(+). In terms of biological role, nitrilase that hydrolyzes preferentially phenylacetonitrile, (R,S)-mandelonitrile, and 3-indolylacetonitrile. This chain is Arylacetonitrilase, found in Fusarium vanettenii (strain ATCC MYA-4622 / CBS 123669 / FGSC 9596 / NRRL 45880 / 77-13-4) (Fusarium solani subsp. pisi).